A 659-amino-acid polypeptide reads, in one-letter code: UvrABC system protein B (659 aa).

The 158-residue stretch at 25-182 folds into the Helicase ATP-binding domain; sequence QSIENGNRGQ…KKLIEIQYER (158 aa). An ATP-binding site is contributed by 38–45; the sequence is GVTGSGKT. Positions 91-114 match the Beta-hairpin motif; it reads YYDYYQPEAYVPQTDTFIEKDASI. Residues 429 to 582 form the Helicase C-terminal domain; that stretch reads QIDDLYGEIQ…QMEYNEEHNI (154 aa). Residues 622-657 enclose the UVR domain; it reads EKLIEQYEEEMKEAAKNLQFERAAELRDIIKDLKEN.

The protein belongs to the UvrB family. In terms of assembly, forms a heterotetramer with UvrA during the search for lesions. Interacts with UvrC in an incision complex.

It is found in the cytoplasm. Functionally, the UvrABC repair system catalyzes the recognition and processing of DNA lesions. A damage recognition complex composed of 2 UvrA and 2 UvrB subunits scans DNA for abnormalities. Upon binding of the UvrA(2)B(2) complex to a putative damaged site, the DNA wraps around one UvrB monomer. DNA wrap is dependent on ATP binding by UvrB and probably causes local melting of the DNA helix, facilitating insertion of UvrB beta-hairpin between the DNA strands. Then UvrB probes one DNA strand for the presence of a lesion. If a lesion is found the UvrA subunits dissociate and the UvrB-DNA preincision complex is formed. This complex is subsequently bound by UvrC and the second UvrB is released. If no lesion is found, the DNA wraps around the other UvrB subunit that will check the other stand for damage. The polypeptide is UvrABC system protein B (Clostridium perfringens (strain ATCC 13124 / DSM 756 / JCM 1290 / NCIMB 6125 / NCTC 8237 / Type A)).